The primary structure comprises 512 residues: uncharacterized protein (512 aa).

The next 2 helical transmembrane spans lie at 20 to 40 (IFPV…IYIW) and 222 to 242 (GIAL…FGYI). Residues 297-512 (EQLIQSIEQT…TLMCYQIPLV (216 aa)) form the Histidine kinase domain. Residue His-325 is modified to Phosphohistidine; by autocatalysis.

In terms of processing, autophosphorylated.

It is found in the cell membrane. It catalyses the reaction ATP + protein L-histidine = ADP + protein N-phospho-L-histidine.. Functionally, probable member of the two-component regulatory system SE_0166/SE_0165. May activate SE_0165 by phosphorylation. This is an uncharacterized protein from Staphylococcus epidermidis (strain ATCC 12228 / FDA PCI 1200).